The sequence spans 340 residues: ATP-dependent 6-phosphofructokinase (340 aa).

Gly11 contacts ATP. 21–25 (RAVVR) contacts ADP. ATP-binding positions include 72-73 (RY) and 102-105 (GDGS). Asp103 contacts Mg(2+). 125–127 (TID) lines the substrate pocket. Catalysis depends on Asp127, which acts as the Proton acceptor. Arg154 contributes to the ADP binding site. Substrate contacts are provided by residues Arg162 and 169-171 (MGR). ADP contacts are provided by residues 185 to 187 (GAD), Lys211, and 213 to 215 (KNH). Residues Glu222, Arg244, and 250–253 (HIQR) contribute to the substrate site.

It belongs to the phosphofructokinase type A (PFKA) family. ATP-dependent PFK group I subfamily. Prokaryotic clade 'B1' sub-subfamily. Homotetramer. Mg(2+) is required as a cofactor.

It localises to the cytoplasm. It catalyses the reaction beta-D-fructose 6-phosphate + ATP = beta-D-fructose 1,6-bisphosphate + ADP + H(+). It participates in carbohydrate degradation; glycolysis; D-glyceraldehyde 3-phosphate and glycerone phosphate from D-glucose: step 3/4. With respect to regulation, allosterically activated by ADP and other diphosphonucleosides, and allosterically inhibited by phosphoenolpyruvate. Functionally, catalyzes the phosphorylation of D-fructose 6-phosphate to fructose 1,6-bisphosphate by ATP, the first committing step of glycolysis. This Lactococcus lactis subsp. lactis (Streptococcus lactis) protein is ATP-dependent 6-phosphofructokinase.